Consider the following 191-residue polypeptide: Ribosome maturation factor RimM (191 aa).

The PRC barrel domain maps to 107-184 (EDDEWHQDDL…LVLVSPPPGL (78 aa)).

Belongs to the RimM family. In terms of assembly, binds ribosomal protein uS19.

It localises to the cytoplasm. Functionally, an accessory protein needed during the final step in the assembly of 30S ribosomal subunit, possibly for assembly of the head region. Essential for efficient processing of 16S rRNA. May be needed both before and after RbfA during the maturation of 16S rRNA. It has affinity for free ribosomal 30S subunits but not for 70S ribosomes. The polypeptide is Ribosome maturation factor RimM (Kocuria rhizophila (strain ATCC 9341 / DSM 348 / NBRC 103217 / DC2201)).